The following is a 187-amino-acid chain: Ribosome-recycling factor (187 aa).

The protein belongs to the RRF family.

Its subcellular location is the cytoplasm. Responsible for the release of ribosomes from messenger RNA at the termination of protein biosynthesis. May increase the efficiency of translation by recycling ribosomes from one round of translation to another. This chain is Ribosome-recycling factor, found in Methylorubrum extorquens (strain CM4 / NCIMB 13688) (Methylobacterium extorquens).